A 93-amino-acid polypeptide reads, in one-letter code: MKFAVILLFTLVVLAVASESVEEDTREIDVEEFQEQQRGCADLRQPCTKGDDCSCCGSDGVCNCEHLHKTGCFCKTAGPYEKLKKWFKRCPKY.

The N-terminal stretch at 1-18 (MKFAVILLFTLVVLAVAS) is a signal peptide. A propeptide spanning residues 19-38 (ESVEEDTREIDVEEFQEQQR) is cleaved from the precursor.

This sequence belongs to the neurotoxin 31 family. In terms of processing, contains 5 disulfide bonds. In terms of tissue distribution, expressed by the venom gland.

Its subcellular location is the secreted. The protein is U12-lycotoxin-Ls1e of Lycosa singoriensis (Wolf spider).